Here is a 373-residue protein sequence, read N- to C-terminus: MPPCPPQPNRNRLPQLPTGELGEMELTWQEIMSITELQGLNVPSEPSFEPQAPTPYPGPLPPPTYCPCSIHPDAGFTLPPPPYELPASTPHAPDLPYSYGNIAIPVSKPLTLSGLLNEPLPDPLALLDIGLPVGQPKPQEDPESDSGLSLNYSDAESLELEGTEAGRRRSEYVDMYPVEYPYSLMPNSLAHPNYTLPPTETPLVLESSSGPVRAKPAVRGEAGSRDERRALAMKIPFPTDKIVNLPVDDFNELLAQYPLTESQLALVRDIRRRGKNKVAAQNCRKRKLETIVQLERELERLGSERERLLRARGEADRTLEVMRQQLTELYHDIFQHLRDESGNSYSPEEYVLQQAADGAIFLVPRGTKMEATD.

2 disordered regions span residues methionine 1–glycine 22 and leucine 40–leucine 60. The tract at residues methionine 1–tyrosine 83 is required for interaction with MAPK8. The transactivation domain stretch occupies residues methionine 1 to glutamate 206. Short sequence motifs (PXY motif) lie at residues proline 61–tyrosine 65 and proline 79–tyrosine 83. The interval leucine 131–threonine 163 is disordered. Position 157 is a phosphoserine; by MAPK8 (serine 157). Residue serine 170 is modified to Phosphoserine; by PKA. Positions glutamate 206 to arginine 225 are disordered. Residues leucine 266–leucine 329 enclose the bZIP domain. The basic motif stretch occupies residues arginine 268–lysine 287. The interval isoleucine 291–leucine 298 is leucine-zipper. Lysine 368 participates in a covalent cross-link: Glycyl lysine isopeptide (Lys-Gly) (interchain with G-Cter in SUMO); alternate. Lysine 368 is covalently cross-linked (Glycyl lysine isopeptide (Lys-Gly) (interchain with G-Cter in SUMO1); alternate).

This sequence belongs to the bZIP family. CNC subfamily. In terms of assembly, homodimer; can bind DNA as a homodimer. Erythroid transcription activator nuclear factor erythroid-derived 2 (NF-E2), composed of a heterodimer of NFE2 and MAFK, possesses transactivation activity on beta-globin. Also forms high affinity heterodimer with MAFG; the interaction promotes erythropoiesis. Interacts (via the PXY motif 1) with ITCH (via the WW 1 domain); the interaction promotes 'Lys63'-linked ubiquitination of NFE2, translocates it to the cytoplasm and inhibits its transactivation activity. Interacts with KMT2D/MLL2; the interaction promotes transactivation of the beta-globin locus. Interacts with MAPK8 (phosphorylated form); the interaction leads to phosphorylation of NFE2 in undifferentiated cells. Phosphorylated on serine residues. In undifferentiated erythrocytes, phosphorylated by MAPK8 which then leads to ubiquitination and protein degradation. In terms of processing, sumoylated. Sumoylation is required for translocation to nuclear bodies PODs, anchoring to the gene loci, and transactivation of the beta-globin gene. Post-translationally, ubiquitinated mainly by 'Lys63'-linked ubiquitin. Polyubiquitination with 'Lys63'-linked ubiquitin by ITCH retains NFE2 in the cytoplasm preventing its transactivation activity. In undifferentiated erythrocyte, ubiquitinated after MAPK8-mediatd phosphorylation leading to protein degradation.

The protein localises to the nucleus. It is found in the PML body. Its subcellular location is the cytoplasm. In terms of biological role, component of the NF-E2 complex essential for regulating erythroid and megakaryocytic maturation and differentiation. Binds to the hypersensitive site 2 (HS2) of the beta-globin control region (LCR). This subunit (NFE2) recognizes the TCAT/C sequence of the AP-1-like core palindrome present in a number of erythroid and megakaryocytic gene promoters. Requires MAFK or other small MAF proteins for binding to the NF-E2 motif. May play a role in all aspects of hemoglobin production from globin and heme synthesis to procurement of iron. This chain is Transcription factor NF-E2 45 kDa subunit (Nfe2), found in Rattus norvegicus (Rat).